The chain runs to 840 residues: Radial spoke head 10 homolog B (840 aa).

Composition is skewed to basic and acidic residues over residues 1–16 (MVKEKKKADKKGDKSA) and 51–63 (QPKDPGVKREVKS). A disordered region spans residues 1 to 74 (MVKEKKKADK…SLPNEDTTQY (74 aa)). MORN repeat units lie at residues 86–108 (SYEGEKVRGLYEGEGFAIFQGGC), 109–131 (TYQGMFSEGLMHGQGTYIWADGL), 132–154 (KYEGDFVKNIPMNHGIFTWPDGS), 155–177 (TYEGEVVGGMRHGFGMFKCSTQP), 179–201 (SYIGHWCHGKRHGKGSIYYNQEG), 204–226 (WYEGDWIHNIRKGWGIRCYKSGN), 227–249 (IYEGQWENNVRHGEGRMRWLTTN), 251–273 (EYTGQWKHGVQNGLGTHTWFLKR), 284–306 (EYVGEFVNGYRHGHGKFYYASGA), and 307–329 (MYEGEWVSNKKHGMGRLTFKNGR). A coiled-coil region spans residues 758-801 (KEKVKENRLHNEAMALQRKMENEELEARLNSLREEEAKRQDYEV). Residues 810–840 (VDAPSSSFTPSPPKEDTVVSSKSITSKKKKK) form a disordered region.

In terms of assembly, interacts with RSPH6A. Does not appear to be part of the axonemal radial spoke complexes 1 or 2.

The protein localises to the cytoplasm. It is found in the cytoskeleton. It localises to the cilium axoneme. The protein resides in the cell projection. Its subcellular location is the cilium. The protein localises to the flagellum. May function as part of the axonemal radial spoke complex 3 (RS3). Radial spoke complexes are important for ciliary motility. This Bos taurus (Bovine) protein is Radial spoke head 10 homolog B (RSPH10B).